The primary structure comprises 239 residues: Ubiquinone biosynthesis O-methyltransferase (239 aa).

Residues Arg44, Gly63, Asp84, and Met128 each contribute to the S-adenosyl-L-methionine site.

The protein belongs to the methyltransferase superfamily. UbiG/COQ3 family.

It catalyses the reaction a 3-demethylubiquinol + S-adenosyl-L-methionine = a ubiquinol + S-adenosyl-L-homocysteine + H(+). The catalysed reaction is a 3-(all-trans-polyprenyl)benzene-1,2-diol + S-adenosyl-L-methionine = a 2-methoxy-6-(all-trans-polyprenyl)phenol + S-adenosyl-L-homocysteine + H(+). Its pathway is cofactor biosynthesis; ubiquinone biosynthesis. O-methyltransferase that catalyzes the 2 O-methylation steps in the ubiquinone biosynthetic pathway. This Xanthomonas oryzae pv. oryzae (strain MAFF 311018) protein is Ubiquinone biosynthesis O-methyltransferase.